Reading from the N-terminus, the 442-residue chain is DNA topoisomerase 6 subunit A3 (442 aa).

The segment at Met-1–Ser-34 is disordered. Residues Gln-91 to Val-224 enclose the Topo IIA-type catalytic domain. The active-site O-(5'-phospho-DNA)-tyrosine intermediate is the Tyr-185. 2 residues coordinate Mg(2+): Glu-271 and Asp-323.

It belongs to the TOP6A family. In terms of assembly, homodimer. Heterotetramer of two TOP6A and two TOP6B subunits. Interacts with TOP6B. Mg(2+) serves as cofactor. In terms of tissue distribution, highly expressed in flowers before pollination. Expressed in roots and shoots.

It is found in the nucleus. The catalysed reaction is ATP-dependent breakage, passage and rejoining of double-stranded DNA.. In terms of biological role, component of the DNA topoisomerase VI involved in chromatin organization and progression of endoreduplication cycles. Relaxes both positive and negative superturns and exhibits a strong decatenase activity. May be involved in cell proliferation and stress tolerance. This is DNA topoisomerase 6 subunit A3 from Oryza sativa subsp. indica (Rice).